The primary structure comprises 370 residues: Holliday junction branch migration complex subunit RuvB (370 aa).

Positions 1–53 (MAILSSQKQPLEPEPSKNPQSVQQPGLPPSTPEQGLLTAEVSPEERLSRTDDI) are disordered. The segment at 13–214 (PEPSKNPQSV…FGLIQRLRFY (202 aa)) is large ATPase domain (RuvB-L). The segment covering 43-53 (PEERLSRTDDI) has biased composition (basic and acidic residues). ATP contacts are provided by residues Ile53, Arg54, Gly95, Lys98, Thr99, Thr100, 161–163 (EDF), Arg204, Tyr214, and Arg251. Mg(2+) is bound at residue Thr99. The segment at 215–285 (EPEELSQIIL…IASEALQLFN (71 aa)) is small ATPAse domain (RuvB-S). The tract at residues 288 to 370 (PCGLDWTDRR…TPPDGQLSLL (83 aa)) is head domain (RuvB-H). Arg343 and Arg348 together coordinate DNA.

Belongs to the RuvB family. In terms of assembly, homohexamer. Forms an RuvA(8)-RuvB(12)-Holliday junction (HJ) complex. HJ DNA is sandwiched between 2 RuvA tetramers; dsDNA enters through RuvA and exits via RuvB. An RuvB hexamer assembles on each DNA strand where it exits the tetramer. Each RuvB hexamer is contacted by two RuvA subunits (via domain III) on 2 adjacent RuvB subunits; this complex drives branch migration. In the full resolvosome a probable DNA-RuvA(4)-RuvB(12)-RuvC(2) complex forms which resolves the HJ.

The protein resides in the cytoplasm. It catalyses the reaction ATP + H2O = ADP + phosphate + H(+). In terms of biological role, the RuvA-RuvB-RuvC complex processes Holliday junction (HJ) DNA during genetic recombination and DNA repair, while the RuvA-RuvB complex plays an important role in the rescue of blocked DNA replication forks via replication fork reversal (RFR). RuvA specifically binds to HJ cruciform DNA, conferring on it an open structure. The RuvB hexamer acts as an ATP-dependent pump, pulling dsDNA into and through the RuvAB complex. RuvB forms 2 homohexamers on either side of HJ DNA bound by 1 or 2 RuvA tetramers; 4 subunits per hexamer contact DNA at a time. Coordinated motions by a converter formed by DNA-disengaged RuvB subunits stimulates ATP hydrolysis and nucleotide exchange. Immobilization of the converter enables RuvB to convert the ATP-contained energy into a lever motion, pulling 2 nucleotides of DNA out of the RuvA tetramer per ATP hydrolyzed, thus driving DNA branch migration. The RuvB motors rotate together with the DNA substrate, which together with the progressing nucleotide cycle form the mechanistic basis for DNA recombination by continuous HJ branch migration. Branch migration allows RuvC to scan DNA until it finds its consensus sequence, where it cleaves and resolves cruciform DNA. This Cyanothece sp. (strain PCC 7425 / ATCC 29141) protein is Holliday junction branch migration complex subunit RuvB.